Consider the following 416-residue polypeptide: Serine hydroxymethyltransferase (416 aa).

Residues leucine 118 and 122 to 124 each bind (6S)-5,6,7,8-tetrahydrofolate; that span reads GHL. Position 226 is an N6-(pyridoxal phosphate)lysine (lysine 226). Residues glutamate 242 and 350-352 each bind (6S)-5,6,7,8-tetrahydrofolate; that span reads SPF.

This sequence belongs to the SHMT family. In terms of assembly, homodimer. Pyridoxal 5'-phosphate serves as cofactor.

It is found in the cytoplasm. It catalyses the reaction (6R)-5,10-methylene-5,6,7,8-tetrahydrofolate + glycine + H2O = (6S)-5,6,7,8-tetrahydrofolate + L-serine. The protein operates within one-carbon metabolism; tetrahydrofolate interconversion. It participates in amino-acid biosynthesis; glycine biosynthesis; glycine from L-serine: step 1/1. In terms of biological role, catalyzes the reversible interconversion of serine and glycine with tetrahydrofolate (THF) serving as the one-carbon carrier. This reaction serves as the major source of one-carbon groups required for the biosynthesis of purines, thymidylate, methionine, and other important biomolecules. Also exhibits THF-independent aldolase activity toward beta-hydroxyamino acids, producing glycine and aldehydes, via a retro-aldol mechanism. The polypeptide is Serine hydroxymethyltransferase (Helicobacter pylori (strain ATCC 700392 / 26695) (Campylobacter pylori)).